The primary structure comprises 129 residues: Glycine cleavage system H protein (129 aa).

The Lipoyl-binding domain maps to 24–106 (LFKIGVSEFA…IGDGWLLIIK (83 aa)). Lys65 is subject to N6-lipoyllysine.

This sequence belongs to the GcvH family. As to quaternary structure, the glycine cleavage system is composed of four proteins: P, T, L and H. It depends on (R)-lipoate as a cofactor.

The glycine cleavage system catalyzes the degradation of glycine. The H protein shuttles the methylamine group of glycine from the P protein to the T protein. This Prochlorococcus marinus subsp. pastoris (strain CCMP1986 / NIES-2087 / MED4) protein is Glycine cleavage system H protein.